A 534-amino-acid chain; its full sequence is Pentatricopeptide repeat-containing protein At2g20540 (534 aa).

PPR repeat units follow at residues 41–71 (SSFMVTKMVDFCDKIEDMDYATRLFNQVSNP), 72–106 (NVFLYNSIIRAYTHNSLYCDVIRIYKQLLRKSFEL), 108–142 (DRFTFPFMFKSCASLGSCYLGKQVHGHLCKFGPRF), 143–173 (HVVTENALIDMYMKFDDLVDAHKVFDEMYER), 174–208 (DVISWNSLLSGYARLGQMKKAKGLFHLMLDKTIVS), 209–239 (WTAMISGYTGIGCYVEAMDFFREMQLAGIEP), 240–274 (DEISLISVLPSCAQLGSLELGKWIHLYAERRGFLK), 275–305 (QTGVCNALIEMYSKCGVISQAIQLFGQMEGK), 306–340 (DVISWSTMISGYAYHGNAHGAIETFNEMQRAKVKP), 341–371 (NGITFLGLLSACSHVGMWQEGLRYFDMMRQD), and 377–407 (KIEHYGCLIDVLARAGKLERAVEITKTMPMK). The segment at 412–487 (IWGSLLSSCR…TPGGSLIEVN (76 aa)) is type E motif. Residues 488 to 518 (NIVQEFVSGDNSKPFWTEISIVLQLFTSHQD) form a type E(+) motif region.

The protein belongs to the PPR family. PCMP-E subfamily.

In Arabidopsis thaliana (Mouse-ear cress), this protein is Pentatricopeptide repeat-containing protein At2g20540 (PCMP-E78).